A 343-amino-acid polypeptide reads, in one-letter code: Dihydroorotase (343 aa).

2 residues coordinate Zn(2+): His14 and His16. Residues 16–18 (HVR) and Asn42 each bind substrate. Positions 99, 136, and 174 each coordinate Zn(2+). Lys99 carries the N6-carboxylysine modification. A substrate-binding site is contributed by His136. Leu219 lines the substrate pocket. Asp247 serves as a coordination point for Zn(2+). The active site involves Asp247. His251 and Ala263 together coordinate substrate.

The protein belongs to the metallo-dependent hydrolases superfamily. DHOase family. Class II DHOase subfamily. Homodimer. Zn(2+) serves as cofactor.

The catalysed reaction is (S)-dihydroorotate + H2O = N-carbamoyl-L-aspartate + H(+). The protein operates within pyrimidine metabolism; UMP biosynthesis via de novo pathway; (S)-dihydroorotate from bicarbonate: step 3/3. Catalyzes the reversible cyclization of carbamoyl aspartate to dihydroorotate. The protein is Dihydroorotase of Variovorax paradoxus (strain S110).